A 389-amino-acid chain; its full sequence is Probable DNA double-strand break repair nuclease NurA (389 aa).

Residues Asp74 and Asp151 each contribute to the Mn(2+) site.

This sequence belongs to the NurA family. Requires Mn(2+) as cofactor.

Involved in DNA double-strand break (DSB) repair. Probably acts with HerA to stimulate resection of the 5' strand and produce the long 3' single-strand that is required for RadA loading. In Methanocaldococcus jannaschii (strain ATCC 43067 / DSM 2661 / JAL-1 / JCM 10045 / NBRC 100440) (Methanococcus jannaschii), this protein is Probable DNA double-strand break repair nuclease NurA.